The following is a 257-amino-acid chain: Zinc transporter ZupT (257 aa).

3 helical membrane-spanning segments follow: residues Leu5–Gly25, Val32–Met52, and Gly61–Leu81. Positions 120 and 123 each coordinate Fe(2+). Zn(2+) is bound by residues Glu123 and His148. 3 residues coordinate Fe(2+): Asn149, Glu152, and Glu181. Glu152 lines the Zn(2+) pocket. 3 helical membrane-spanning segments follow: residues Ile182–Ala202, Ala203–Leu223, and Gly236–Ile256.

Belongs to the ZIP transporter (TC 2.A.5) family. ZupT subfamily.

It localises to the cell inner membrane. The enzyme catalyses Zn(2+)(in) = Zn(2+)(out). Mediates zinc uptake. May also transport other divalent cations. This is Zinc transporter ZupT from Salmonella arizonae (strain ATCC BAA-731 / CDC346-86 / RSK2980).